The primary structure comprises 269 residues: Thymidylate synthase (269 aa).

DUMP-binding positions include Arg-21 and 125–126; that span reads RR. The active-site Nucleophile is Cys-145. Residues 171–174, Asn-182, and 212–214 contribute to the dUMP site; these read RSGD and HVY. Asp-174 contacts (6R)-5,10-methylene-5,6,7,8-tetrahydrofolate. Ala-268 serves as a coordination point for (6R)-5,10-methylene-5,6,7,8-tetrahydrofolate.

Belongs to the thymidylate synthase family. Bacterial-type ThyA subfamily. Homodimer.

Its subcellular location is the cytoplasm. It carries out the reaction dUMP + (6R)-5,10-methylene-5,6,7,8-tetrahydrofolate = 7,8-dihydrofolate + dTMP. It participates in pyrimidine metabolism; dTTP biosynthesis. Its function is as follows. Catalyzes the reductive methylation of 2'-deoxyuridine-5'-monophosphate (dUMP) to 2'-deoxythymidine-5'-monophosphate (dTMP) while utilizing 5,10-methylenetetrahydrofolate (mTHF) as the methyl donor and reductant in the reaction, yielding dihydrofolate (DHF) as a by-product. This enzymatic reaction provides an intracellular de novo source of dTMP, an essential precursor for DNA biosynthesis. The polypeptide is Thymidylate synthase (Cutibacterium acnes (strain DSM 16379 / KPA171202) (Propionibacterium acnes)).